The sequence spans 371 residues: 3-isopropylmalate dehydrogenase B (371 aa).

79–93 (GSKVDHIRRGLDGPE) serves as a coordination point for NAD(+). Substrate-binding residues include Arg100, Arg110, Arg142, and Asp229. Asp229, Asp254, and Asp258 together coordinate Mg(2+). Position 296-308 (296-308 (GSAPTIAGKNIAN)) interacts with NAD(+).

Belongs to the isocitrate and isopropylmalate dehydrogenases family. In terms of assembly, homodimer. Requires Mg(2+) as cofactor. It depends on Mn(2+) as a cofactor.

The protein localises to the cytoplasm. It catalyses the reaction (2R,3S)-3-isopropylmalate + NAD(+) = 4-methyl-2-oxopentanoate + CO2 + NADH. The protein operates within amino-acid biosynthesis; L-leucine biosynthesis; L-leucine from 3-methyl-2-oxobutanoate: step 3/4. In terms of biological role, catalyzes the oxidation of 3-carboxy-2-hydroxy-4-methylpentanoate (3-isopropylmalate) to 3-carboxy-4-methyl-2-oxopentanoate. The product decarboxylates to 4-methyl-2 oxopentanoate. In Aspergillus niger, this protein is 3-isopropylmalate dehydrogenase B (leu2B).